The following is a 432-amino-acid chain: MPAIVLIGAQWGDEGKGKATDLLGGRVQWVVRYQGGNNAGHTVVLPTGENFALHLIPSGVLTPGVTNVIGNGVVVDPGVLLDELKGLEDRGVDTSRLLISADAHLLLPYHVAIDKVTERYMGNKKIGTTGRGIGPCYQDKIARIGIRVADVLDREVLTHKIEAALELKNQILVKIYNRKALDPHQVVECLLEQAEGFRHRIADTRLLLNTALEAGETVLLEGSQGTLLDVDHGTYPYVTSSNPTAGGAAVGSGIGPTRITAVLGILKAYTTRVGSGPFPTELFDENGEYLSKTGGEFGVTTGRRRRCGWFDAVVARYATRVNGITDFFLTKLDVLSSLETVPVCVGYRIDGARINEMPMTQSDLHRAEPIYEELPGWWEDISAAREFDDLPAKARDYVLRLEELAGAHVSCIGVGPGREQTIVRRDILAARP.

Residues glycine 12–lysine 18 and glycine 40–threonine 42 contribute to the GTP site. Catalysis depends on aspartate 13, which acts as the Proton acceptor. Mg(2+) contacts are provided by aspartate 13 and glycine 40. IMP is bound by residues aspartate 13–lysine 16, asparagine 38–histidine 41, threonine 129, arginine 143, glutamine 224, threonine 239, and arginine 303. Histidine 41 functions as the Proton donor in the catalytic mechanism. Valine 299–arginine 305 lines the substrate pocket. GTP is bound by residues arginine 305, lysine 331–aspartate 333, and glycine 413–glycine 415.

The protein belongs to the adenylosuccinate synthetase family. As to quaternary structure, homodimer. It depends on Mg(2+) as a cofactor.

The protein resides in the cytoplasm. It catalyses the reaction IMP + L-aspartate + GTP = N(6)-(1,2-dicarboxyethyl)-AMP + GDP + phosphate + 2 H(+). The protein operates within purine metabolism; AMP biosynthesis via de novo pathway; AMP from IMP: step 1/2. In terms of biological role, plays an important role in the de novo pathway of purine nucleotide biosynthesis. Catalyzes the first committed step in the biosynthesis of AMP from IMP. The sequence is that of Adenylosuccinate synthetase from Mycobacterium avium (strain 104).